Reading from the N-terminus, the 828-residue chain is Glycerol-3-phosphate acyltransferase (828 aa).

Positions 309 to 314 (CHRSHI) match the HXXXXD motif motif.

This sequence belongs to the GPAT/DAPAT family.

It localises to the cell inner membrane. It carries out the reaction sn-glycerol 3-phosphate + an acyl-CoA = a 1-acyl-sn-glycero-3-phosphate + CoA. It functions in the pathway phospholipid metabolism; CDP-diacylglycerol biosynthesis; CDP-diacylglycerol from sn-glycerol 3-phosphate: step 1/3. The chain is Glycerol-3-phosphate acyltransferase from Pseudomonas putida (strain W619).